Reading from the N-terminus, the 1787-residue chain is ATP-dependent RNA helicase DEAH11, chloroplastic (1787 aa).

Residues 1 to 33 (MRNSFPPSDGGRSTTDRRQQSFPSSSTNRYNSR) constitute a chloroplast transit peptide. A disordered region spans residues 1–75 (MRNSFPPSDG…DRAPSSGFSP (75 aa)). Residues 20-60 (QSFPSSSTNRYNSRSAQSSPPLNHCTTWNQQHSQYHNTNFP) show a composition bias toward polar residues. The 165-residue stretch at 313–477 (LKKIHCEQIM…LFDCGILHVN (165 aa)) folds into the Helicase ATP-binding domain. Residue 326–333 (GETGSGKS) coordinates ATP. The short motif at 424–427 (DEAH) is the DEAH box element. The Helicase C-terminal domain maps to 507 to 673 (DVVKMAVEIH…VALLRMLALG (167 aa)). Positions 1557–1764 (IELECPICLS…EPCYAHLRTI (208 aa)) are TRIAD supradomain. Zn(2+) contacts are provided by C1561, C1564, C1577, H1579, C1582, C1585, C1604, C1609, C1649, C1654, C1672, C1675, C1680, C1683, H1688, C1693, C1719, and C1722. The RING-type 1 zinc-finger motif lies at 1561–1609 (CPICLSEVDDGYSLEGCSHLFCKACLLEQFEASMRNFDAFPILCSHIDC). Residues 1628-1693 (DELISASLSA…HLEYHPLITC (66 aa)) form an IBR-type zinc finger. An RING-type 2; atypical zinc finger spans residues 1719 to 1747 (CPICKSTIEKTDGCNHLQCRCGKHICWTC). The active site involves C1732. Positions 1737 and 1739 each coordinate Zn(2+).

Belongs to the DEAD box helicase family. DEAH subfamily.

It is found in the plastid. It localises to the chloroplast. It carries out the reaction ATP + H2O = ADP + phosphate + H(+). This is ATP-dependent RNA helicase DEAH11, chloroplastic from Arabidopsis thaliana (Mouse-ear cress).